The primary structure comprises 391 residues: Suppressor APC domain-containing protein 2 (391 aa).

Residues 1-20 are disordered; that stretch reads MAVAAMAERGRLSHAAPAPS. Residue Thr-218 is modified to Phosphothreonine. The stretch at 226-277 forms a coiled coil; that stretch reads SLLKQMKELDQEQEVLLQGLEMMARGRDWYQQQLQRVQERQRRLSQSRAAAD. Ser-283 carries the phosphoserine modification. The stretch at 340–381 forms a coiled coil; that stretch reads LKEQNRLLTQEVTDKSERITQLEQEKSALIKQLFEARALSQQ.

In terms of assembly, interacts with a spindle orientation complex at least composed of GNAI1, GPSM2 and NUMA1. Interacts with GPSM2 (via TPR motifs); this interaction is required to prevent GPSM2 anchoring at the mitotic apical cortex and is inhibited in presence of NUMA1 in a dose dependent manner. Interacts with PARD3. Expressed in the retina. Expressed in retinal progenitor cells and newly differentiated neurons but not in mature retinal cells (at protein level).

The protein localises to the cytoplasm. It is found in the nucleus. The protein resides in the cell cortex. Its subcellular location is the apical cell membrane. It localises to the cell junction. The protein localises to the tight junction. Plays a role in planar mitotic spindle orientation in retinal progenitor cells (RPCs) and promotes the production of symmetric terminal divisions. Negatively regulates the mitotic apical cortex localization of GPSM2. Involved also in positive regulation of cell proliferation and tumor cell growth. This chain is Suppressor APC domain-containing protein 2, found in Mus musculus (Mouse).